Consider the following 417-residue polypeptide: Phosphoglycerate kinase 1 (417 aa).

Ser-2 bears the N-acetylserine mark. Ser-2 and Ser-4 each carry phosphoserine. The residue at position 6 (Lys-6) is an N6-succinyllysine. At Lys-11 the chain carries N6-acetyllysine. (2R)-3-phosphoglycerate is bound by residues Val-23, Asp-24, Phe-25, Asn-26, Gln-38, and Arg-39. The interval 38–43 (QRIKAA) is mitochondrial targeting region exposed following cis-trans isomerization by PIN1 and recognized by the TOM complex for mitochondrial translocation of the protein. The residue at position 48 (Lys-48) is an N6-acetyllysine; alternate. Lys-48 carries the post-translational modification N6-succinyllysine; alternate. Ser-62, His-63, Gly-65, and Arg-66 together coordinate (2R)-3-phosphoglycerate. At Lys-75 the chain carries N6-acetyllysine. A Phosphotyrosine modification is found at Tyr-76. N6-acetyllysine occurs at positions 86 and 91. Lys-97 carries the N6-acetyllysine; alternate modification. Lys-97 is subject to N6-(2-hydroxyisobutyryl)lysine; alternate. Residues Leu-122 and Arg-123 each coordinate (2R)-3-phosphoglycerate. Residue Lys-131 is modified to N6-acetyllysine; alternate. An N6-malonyllysine; alternate modification is found at Lys-131. At Lys-146 the chain carries N6-acetyllysine. The (2R)-3-phosphoglycerate site is built by His-170 and Arg-171. Lys-191 is modified (N6-succinyllysine). Tyr-196 is modified (phosphotyrosine). Lys-199 carries the post-translational modification N6-acetyllysine. Ser-203 carries the post-translational modification Phosphoserine; by MAPK1. Gly-214 contacts ADP. Gly-214 provides a ligand contact to CDP. AMP-binding residues include Ala-215 and Lys-216. Ala-215 lines the ATP pocket. Ala-215 contributes to the Mg(2+) binding site. An N6-(2-hydroxyisobutyryl)lysine modification is found at Lys-216. Mg(2+)-binding residues include Ala-218 and Asp-219. A CDP-binding site is contributed by Asp-219. Lys-220 provides a ligand contact to AMP. Residue Lys-220 participates in ATP binding. The residue at position 220 (Lys-220) is an N6-(2-hydroxyisobutyryl)lysine. Residue Gly-238 participates in ADP binding. Gly-238 contacts CDP. Gly-239 contacts AMP. Gly-239 contributes to the ATP binding site. N6-acetyllysine is present on residues Lys-267 and Lys-291. Gly-313 is a binding site for AMP. Residue Gly-313 participates in ATP binding. Lys-323 carries the N6-(2-hydroxyisobutyryl)lysine modification. Residues Gly-338, Val-340, and Phe-343 each coordinate CDP. An ADP-binding site is contributed by Phe-343. An AMP-binding site is contributed by Glu-344. Glu-344 contributes to the ATP binding site. N6-acetyllysine is present on Lys-361. Asp-375 and Thr-376 together coordinate ATP. Position 375 (Asp-375) interacts with Mg(2+).

The protein belongs to the phosphoglycerate kinase family. As to quaternary structure, monomer. Interacts with kinase MAPK1/ERK2; the interaction is direct, occurs under hypoxic conditions, and promotes its interaction with PIN1. Interacts with peptidyl-prolyl cis-trans isomerase PIN1; the interaction is direct, occurs under hypoxic conditions, and targets the protein to the mitochondrion by promoting interactions with the TOM complex. Interacts with mitochondrial circRNA mcPGK1 (via its 2nd stem-loop); the interaction is direct and targets the protein to the mitochondrion by promoting interactions with the TOM complex. Interacts with pyruvate dehydrogenase kinase PDK1; the interaction is direct, occurs under hypoxic conditions and leads to PDK1-mediated inhibition of pyruvate dehydrogenase complex activity. Mg(2+) serves as cofactor. Phosphorylated at Ser-203 by MAPK1/ERK2 under hypoxic conditions, which promotes its mitochondrial targeting. As to expression, mainly expressed in spermatogonia. Localized on the principle piece in the sperm (at protein level). Expression significantly decreased in the testis of elderly men.

Its subcellular location is the cytoplasm. It is found in the cytosol. It localises to the mitochondrion matrix. It catalyses the reaction (2R)-3-phosphoglycerate + ATP = (2R)-3-phospho-glyceroyl phosphate + ADP. The catalysed reaction is L-seryl-[protein] + ATP = O-phospho-L-seryl-[protein] + ADP + H(+). It functions in the pathway carbohydrate degradation; glycolysis; pyruvate from D-glyceraldehyde 3-phosphate: step 2/5. Specifically inhibited by heterocyclic compound CBR-470-0. Catalyzes one of the two ATP producing reactions in the glycolytic pathway via the reversible conversion of 1,3-diphosphoglycerate to 3-phosphoglycerate. Both L- and D- forms of purine and pyrimidine nucleotides can be used as substrates, but the activity is much lower on pyrimidines. In addition to its role as a glycolytic enzyme, it seems that PGK1 acts as a polymerase alpha cofactor protein (primer recognition protein). Acts as a protein kinase when localized to the mitochondrion where it phosphorylates pyruvate dehydrogenase kinase PDK1 to inhibit pyruvate dehydrogenase complex activity and suppress the formation of acetyl-coenzyme A from pyruvate, and consequently inhibit oxidative phosphorylation and promote glycolysis. May play a role in sperm motility. In Homo sapiens (Human), this protein is Phosphoglycerate kinase 1 (PGK1).